The chain runs to 325 residues: Glutarate 2-hydroxylase (325 aa).

H160, D162, and H292 together coordinate Fe cation.

It belongs to the glutarate hydroxylase family. As to quaternary structure, homotetramer. Fe(2+) is required as a cofactor.

It catalyses the reaction glutarate + 2-oxoglutarate + O2 = (S)-2-hydroxyglutarate + succinate + CO2. It functions in the pathway amino-acid degradation. In terms of biological role, acts as an alpha-ketoglutarate-dependent dioxygenase catalyzing hydroxylation of glutarate (GA) to L-2-hydroxyglutarate (L2HG). Functions in a L-lysine degradation pathway that proceeds via cadaverine, glutarate and L-2-hydroxyglutarate. The protein is Glutarate 2-hydroxylase of Escherichia coli O6:H1 (strain CFT073 / ATCC 700928 / UPEC).